The chain runs to 272 residues: 1,4-dihydroxy-6-naphtoate synthase (272 aa).

Substrate contacts are provided by residues 55 to 57 (KLS) and 107 to 108 (TA). The active-site Proton acceptor is His-145.

Belongs to the MqnA/MqnD family. MqnD subfamily.

The enzyme catalyses cyclic dehypoxanthinylfutalosinate = 1,4-dihydroxy-6-naphthoate + dihydroxyacetone. It participates in quinol/quinone metabolism; menaquinone biosynthesis. Its function is as follows. Catalyzes the conversion of cyclic dehypoxanthine futalosine (cyclic DHFL) into 1,4-dihydroxy-6-naphthoate, a step in the biosynthesis of menaquinone (MK, vitamin K2). This Thermus thermophilus (strain ATCC 27634 / DSM 579 / HB8) protein is 1,4-dihydroxy-6-naphtoate synthase.